The following is a 439-amino-acid chain: UDP-N-acetylmuramoylalanine--D-glutamate ligase (439 aa).

An ATP-binding site is contributed by 116 to 122; that stretch reads GSNGKTT.

The protein belongs to the MurCDEF family.

It localises to the cytoplasm. It carries out the reaction UDP-N-acetyl-alpha-D-muramoyl-L-alanine + D-glutamate + ATP = UDP-N-acetyl-alpha-D-muramoyl-L-alanyl-D-glutamate + ADP + phosphate + H(+). Its pathway is cell wall biogenesis; peptidoglycan biosynthesis. Its function is as follows. Cell wall formation. Catalyzes the addition of glutamate to the nucleotide precursor UDP-N-acetylmuramoyl-L-alanine (UMA). The polypeptide is UDP-N-acetylmuramoylalanine--D-glutamate ligase (Shewanella oneidensis (strain ATCC 700550 / JCM 31522 / CIP 106686 / LMG 19005 / NCIMB 14063 / MR-1)).